A 426-amino-acid chain; its full sequence is Glutamate-1-semialdehyde 2,1-aminomutase (426 aa).

Lysine 265 carries the post-translational modification N6-(pyridoxal phosphate)lysine.

This sequence belongs to the class-III pyridoxal-phosphate-dependent aminotransferase family. HemL subfamily. As to quaternary structure, homodimer. It depends on pyridoxal 5'-phosphate as a cofactor.

It localises to the cytoplasm. It carries out the reaction (S)-4-amino-5-oxopentanoate = 5-aminolevulinate. It functions in the pathway porphyrin-containing compound metabolism; protoporphyrin-IX biosynthesis; 5-aminolevulinate from L-glutamyl-tRNA(Glu): step 2/2. This is Glutamate-1-semialdehyde 2,1-aminomutase from Escherichia coli O81 (strain ED1a).